A 101-amino-acid polypeptide reads, in one-letter code: MGKQSMKAREAKRAKLVAKFAEKRAALKVLISDVNASEEERWDAVLKLQSLPRDSSASRQRNRCNQTGRPHGYLRKFGLSRIKVREACMKGEIPGLRKASW.

It belongs to the universal ribosomal protein uS14 family. Part of the 30S ribosomal subunit. Contacts proteins S3 and S10.

Binds 16S rRNA, required for the assembly of 30S particles and may also be responsible for determining the conformation of the 16S rRNA at the A site. The chain is Small ribosomal subunit protein uS14 from Aliivibrio fischeri (strain ATCC 700601 / ES114) (Vibrio fischeri).